We begin with the raw amino-acid sequence, 649 residues long: Replication protein E1 (649 aa).

The short motif at 83 to 85 is the Nuclear localization signal element; that stretch reads KRK. Phosphoserine; by host occurs at positions 89, 93, and 107. The short motif at 106 to 115 is the Nuclear export signal element; the sequence is ISPRLDAIKL. Residues 146–188 form a disordered region; the sequence is TQVEKHGDPENGGDGQERDTGRDIEGEGVEHREAEAVDDSTRE. A compositionally biased stretch (basic and acidic residues) spans 148 to 188; sequence VEKHGDPENGGDGQERDTGRDIEGEGVEHREAEAVDDSTRE. Positions 187-353 are DNA-binding region; the sequence is REHADTSGIL…QTVIEHSLAD (167 aa). One can recognise an SF3 helicase domain in the interval 452-602; it reads IEFIPFLSKL…FPFDRNGNAV (151 aa). An ATP-binding site is contributed by 478 to 485; sequence GPPDTGKS. A Glycyl lysine isopeptide (Lys-Gly) (interchain with G-Cter in SUMO) cross-link involves residue Lys-559.

It belongs to the papillomaviridae E1 protein family. As to quaternary structure, can form hexamers. Interacts with E2 protein; this interaction increases E1 DNA binding specificity. Interacts with host DNA polymerase subunit POLA2. Interacts with host single stranded DNA-binding protein RPA1. Interacts with host TOP1; this interaction stimulates the enzymatic activity of TOP1. Post-translationally, phosphorylated. Sumoylated.

It is found in the host nucleus. It carries out the reaction Couples ATP hydrolysis with the unwinding of duplex DNA by translocating in the 3'-5' direction.. The enzyme catalyses ATP + H2O = ADP + phosphate + H(+). In terms of biological role, ATP-dependent DNA 3'-5' helicase required for initiation of viral DNA replication. It forms a complex with the viral E2 protein. The E1-E2 complex binds to the replication origin which contains binding sites for both proteins. During the initial step, a dimer of E1 interacts with a dimer of protein E2 leading to a complex that binds the viral origin of replication with high specificity. Then, a second dimer of E1 displaces the E2 dimer in an ATP-dependent manner to form the E1 tetramer. Following this, two E1 monomers are added to each half of the site, which results in the formation of two E1 trimers on the viral ori. Subsequently, two hexamers will be created. The double hexamer acts as a bi-directional helicase machinery and unwinds the viral DNA and then recruits the host DNA polymerase to start replication. The protein is Replication protein E1 of Human papillomavirus 11.